Consider the following 101-residue polypeptide: NADH-quinone oxidoreductase subunit K (101 aa).

3 helical membrane-spanning segments follow: residues 4-24 (LAHY…GIFL), 30-50 (IVLL…FVAF), and 61-81 (VFVF…LAIL).

It belongs to the complex I subunit 4L family. In terms of assembly, NDH-1 is composed of 14 different subunits. Subunits NuoA, H, J, K, L, M, N constitute the membrane sector of the complex.

It localises to the cell inner membrane. It catalyses the reaction a quinone + NADH + 5 H(+)(in) = a quinol + NAD(+) + 4 H(+)(out). NDH-1 shuttles electrons from NADH, via FMN and iron-sulfur (Fe-S) centers, to quinones in the respiratory chain. The immediate electron acceptor for the enzyme in this species is believed to be ubiquinone. Couples the redox reaction to proton translocation (for every two electrons transferred, four hydrogen ions are translocated across the cytoplasmic membrane), and thus conserves the redox energy in a proton gradient. This is NADH-quinone oxidoreductase subunit K from Ralstonia nicotianae (strain ATCC BAA-1114 / GMI1000) (Ralstonia solanacearum).